A 356-amino-acid polypeptide reads, in one-letter code: Protein RecA (356 aa).

78 to 85 (GPESSGKT) contributes to the ATP binding site.

It belongs to the RecA family.

It localises to the cytoplasm. Functionally, can catalyze the hydrolysis of ATP in the presence of single-stranded DNA, the ATP-dependent uptake of single-stranded DNA by duplex DNA, and the ATP-dependent hybridization of homologous single-stranded DNAs. It interacts with LexA causing its activation and leading to its autocatalytic cleavage. This is Protein RecA from Paracoccus denitrificans.